Consider the following 110-residue polypeptide: Phosphoribosyl-ATP pyrophosphatase (110 aa).

It belongs to the PRA-PH family.

The protein localises to the cytoplasm. It carries out the reaction 1-(5-phospho-beta-D-ribosyl)-ATP + H2O = 1-(5-phospho-beta-D-ribosyl)-5'-AMP + diphosphate + H(+). It participates in amino-acid biosynthesis; L-histidine biosynthesis; L-histidine from 5-phospho-alpha-D-ribose 1-diphosphate: step 2/9. The protein is Phosphoribosyl-ATP pyrophosphatase (hisE) of Azotobacter chroococcum mcd 1.